The sequence spans 250 residues: Mediator of RNA polymerase II transcription subunit 6 (250 aa).

A disordered region spans residues 166–250 (KKREEEKKED…EPTARTTSKQ (85 aa)). The segment covering 204–223 (PAEDALEREEKEEVEEEEEE) has biased composition (acidic residues). The segment covering 224–239 (TLKTEEPTTSTDEPKF) has biased composition (basic and acidic residues).

Belongs to the Mediator complex subunit 6 family. As to quaternary structure, component of the Mediator complex. Interacts with let-19/mdt-13. Interacts with RNA polymerase II. Interacts with mdt-28.

The protein resides in the nucleus. Its function is as follows. Component of the Mediator complex, a coactivator involved in the regulated transcription of nearly all RNA polymerase II-dependent genes. Mediator functions as a bridge to convey information from gene-specific regulatory proteins to the basal RNA polymerase II transcription machinery. Mediator is recruited to promoters by direct interactions with regulatory proteins and serves as a scaffold for the assembly of a functional preinitiation complex with RNA polymerase II and the general transcription factors. Acts to repress beta-catenin target genes. Required for asymmetric division of T-cells and for gonad and germ cell development. The polypeptide is Mediator of RNA polymerase II transcription subunit 6 (mdt-6) (Caenorhabditis elegans).